Reading from the N-terminus, the 385-residue chain is Multidrug resistance protein MdtE (385 aa).

Positions 1–20 (MNRRRKLLIPLLFCGAMLTA) are cleaved as a signal peptide. Residue cysteine 21 is the site of N-palmitoyl cysteine attachment. A lipid anchor (S-diacylglycerol cysteine) is attached at cysteine 21.

It belongs to the membrane fusion protein (MFP) (TC 8.A.1) family. As to quaternary structure, homotrimer. Part of the tripartite efflux system MdtEF-TolC, which is composed of an inner membrane transporter, MdtF, a membrane fusion protein, MdtE, and an outer membrane component, TolC. The complex forms a large protein conduit and can translocate molecules across both the inner and outer membranes.

Its subcellular location is the cell inner membrane. In terms of biological role, part of the tripartite efflux system MdtEF-TolC, which confers resistance to various compounds. The sequence is that of Multidrug resistance protein MdtE (mdtE) from Escherichia coli O6:H1 (strain CFT073 / ATCC 700928 / UPEC).